The chain runs to 545 residues: Esterase-5C (545 aa).

Positions 1–19 (MLAARLIILLSFYWLSASA) are cleaved as a signal peptide. Cysteine 84 and cysteine 103 form a disulfide bridge. A glycan (N-linked (GlcNAc...) asparagine) is linked at asparagine 113. The active-site Acyl-ester intermediate is serine 207. Cysteine 259 and cysteine 271 are disulfide-bonded. N-linked (GlcNAc...) asparagine glycosylation is present at asparagine 421. Catalysis depends on histidine 467, which acts as the Charge relay system. Asparagine 507 is a glycosylation site (N-linked (GlcNAc...) asparagine). A disulfide bridge connects residues cysteine 515 and cysteine 536.

Belongs to the type-B carboxylesterase/lipase family.

Its subcellular location is the secreted. The enzyme catalyses a carboxylic ester + H2O = an alcohol + a carboxylate + H(+). The protein is Esterase-5C (Est-5C) of Drosophila pseudoobscura pseudoobscura (Fruit fly).